Reading from the N-terminus, the 888-residue chain is Patched domain-containing protein 1 (888 aa).

A helical transmembrane segment spans residues 20–40 (FIASHPVFFASAPVLISILLG). Asparagine 77, asparagine 133, and asparagine 167 each carry an N-linked (GlcNAc...) asparagine glycan. The SSD domain maps to 268-427 (SERYLVTSLI…LSFYGSSLVF (160 aa)). The next 2 helical transmembrane spans lie at 273–293 (VTSLILVVTMAILCCSMQDCV) and 298–318 (WLGLLGLVTISLATLTAAGII). N-linked (GlcNAc...) asparagine glycosylation is found at asparagine 319 and asparagine 326. Helical transmembrane passes span 328 to 348 (TFLGVPFVMLGHGLYGTFEML), 373 to 393 (LSFSLTTAMYLVTFGIGASPF), 407 to 427 (CIAIFFNYLYVLSFYGSSLVF), and 502 to 522 (PFVVLFYLIYISFALMGYLQV). N-linked (GlcNAc...) asparagine glycans are attached at residues asparagine 568, asparagine 599, and asparagine 608. 2 helical membrane passes run 707–727 (ALFLLFFSAFLVADSLINVWI) and 738–758 (VIGFMTLWKVELDCISVLCLI). Residue asparagine 762 is glycosylated (N-linked (GlcNAc...) asparagine). A helical transmembrane segment spans residues 795-815 (GVAILQSYLCYIVGLIPLAAV). Asparagine 818 carries N-linked (GlcNAc...) asparagine glycosylation. The helical transmembrane segment at 826-846 (CLFLIAFVTFFHCFAILPVIL) threads the bilayer.

The protein belongs to the patched family. As to expression, widely expressed, including in various regions of the brain with highest expression in the gray and white cerebellum, followed by the cerebellar vermis and the pituitary gland.

The protein localises to the cell membrane. Its subcellular location is the cell projection. It localises to the dendritic spine. Its function is as follows. Required for the development and function of the thalamic reticular nucleus (TRN), a part of the thalamus that is critical for thalamocortical transmission, generation of sleep rhythms, sensorimotor processing and attention. Can bind cholesterol in vitro. The sequence is that of Patched domain-containing protein 1 from Homo sapiens (Human).